Consider the following 403-residue polypeptide: S-arrestin (403 aa).

The segment at 11-19 is interaction with RHO; the sequence is HVIFKKVSR. Position 231 is a phosphothreonine (Thr-231). Residues 381–403 are disordered; it reads RQNLKDTGENTEGKKDEDAGQDE.

It belongs to the arrestin family. As to quaternary structure, monomer. Homodimer. Homotetramer. Interacts with RHO (via the phosphorylated C-terminus). In terms of tissue distribution, detected in retina (at protein level).

It is found in the cell projection. Its subcellular location is the cilium. It localises to the photoreceptor outer segment. The protein localises to the membrane. Its function is as follows. Binds to photoactivated, phosphorylated RHO and terminates RHO signaling via G-proteins by competing with G-proteins for the same binding site on RHO. May play a role in preventing light-dependent degeneration of retinal photoreceptor cells. The chain is S-arrestin (Sag) from Mus musculus (Mouse).